The sequence spans 190 residues: Ribose 1,5-bisphosphate phosphokinase PhnN (190 aa).

Residue 10–17 coordinates ATP; sequence GPSGSGKD.

The protein belongs to the ribose 1,5-bisphosphokinase family.

It carries out the reaction alpha-D-ribose 1,5-bisphosphate + ATP = 5-phospho-alpha-D-ribose 1-diphosphate + ADP. The protein operates within metabolic intermediate biosynthesis; 5-phospho-alpha-D-ribose 1-diphosphate biosynthesis; 5-phospho-alpha-D-ribose 1-diphosphate from D-ribose 5-phosphate (route II): step 3/3. In terms of biological role, catalyzes the phosphorylation of ribose 1,5-bisphosphate to 5-phospho-D-ribosyl alpha-1-diphosphate (PRPP). The chain is Ribose 1,5-bisphosphate phosphokinase PhnN from Pseudomonas fluorescens (strain SBW25).